The following is a 1783-amino-acid chain: Chitin synthase A (1783 aa).

5 N-linked (GlcNAc...) asparagine glycosylation sites follow: N159, N637, N652, N664, and N669. 2 helical membrane passes run 745–765 and 781–801; these read IWVA…LSFV and LTLV…IVAF. Residues N1014 and N1018 are each glycosylated (N-linked (GlcNAc...) asparagine). The chain crosses the membrane as a helical span at residues 1051–1071; it reads IMLAMTIILCSVILVKFLAAL. Residue N1416 is glycosylated (N-linked (GlcNAc...) asparagine). Transmembrane regions (helical) follow at residues 1441 to 1461, 1474 to 1494, and 1502 to 1522; these read FVVF…IYLG, FPII…LIFI, and IGWM…LPIY. N1529 and N1617 each carry an N-linked (GlcNAc...) asparagine glycan. Residues 1659–1724 are disordered; that stretch reads THDINRGQTP…SFDFQRGNMQ (66 aa). The span at 1664 to 1688 shows a compositional bias: polar residues; that stretch reads RGQTPFQDFPSSRPSVSNLRGQANP. N-linked (GlcNAc...) asparagine glycosylation occurs at N1695. Positions 1725 to 1781 constitute a DEK-C domain; that stretch reads GPDDSMIIEAIQGVLREVDLDTVTKKQVRALVEQRLQTGLVGERRTFMDRQIDNELA.

Belongs to the chitin synthase family. Class V subfamily.

It is found in the cell membrane. It catalyses the reaction [(1-&gt;4)-N-acetyl-beta-D-glucosaminyl](n) + UDP-N-acetyl-alpha-D-glucosamine = [(1-&gt;4)-N-acetyl-beta-D-glucosaminyl](n+1) + UDP + H(+). In terms of biological role, polymerizes chitin, a structural polymer of the cell wall and septum, by transferring the sugar moiety of UDP-GlcNAc to the non-reducing end of the growing chitin polymer. Responsible for about 29% of the chitin in conidial walls, is essential for conidial wall strength in media with high water potential and contributes to strength of hyphal tips. The sequence is that of Chitin synthase A from Colletotrichum graminicola (Maize anthracnose fungus).